Reading from the N-terminus, the 113-residue chain is Putative membrane protein insertion efficiency factor (113 aa).

Belongs to the UPF0161 family.

It is found in the cell inner membrane. In terms of biological role, could be involved in insertion of integral membrane proteins into the membrane. The sequence is that of Putative membrane protein insertion efficiency factor from Campylobacter jejuni subsp. doylei (strain ATCC BAA-1458 / RM4099 / 269.97).